The following is a 172-amino-acid chain: Shikimate kinase (172 aa).

11-16 (GAGKST) is a binding site for ATP. Residue serine 15 coordinates Mg(2+). The substrate site is built by aspartate 33, arginine 57, and glycine 79. An ATP-binding site is contributed by arginine 117. A substrate-binding site is contributed by arginine 136. Residue arginine 153 coordinates ATP.

This sequence belongs to the shikimate kinase family. In terms of assembly, monomer. It depends on Mg(2+) as a cofactor.

It is found in the cytoplasm. The catalysed reaction is shikimate + ATP = 3-phosphoshikimate + ADP + H(+). It functions in the pathway metabolic intermediate biosynthesis; chorismate biosynthesis; chorismate from D-erythrose 4-phosphate and phosphoenolpyruvate: step 5/7. Catalyzes the specific phosphorylation of the 3-hydroxyl group of shikimic acid using ATP as a cosubstrate. This is Shikimate kinase from Pseudomonas savastanoi pv. phaseolicola (strain 1448A / Race 6) (Pseudomonas syringae pv. phaseolicola (strain 1448A / Race 6)).